The following is a 311-amino-acid chain: Probable manganese-dependent inorganic pyrophosphatase (311 aa).

Residues His-9, Asp-13, Asp-15, Asp-77, His-99, and Asp-151 each contribute to the Mn(2+) site.

Belongs to the PPase class C family. Requires Mn(2+) as cofactor.

It is found in the cytoplasm. It catalyses the reaction diphosphate + H2O = 2 phosphate + H(+). The chain is Probable manganese-dependent inorganic pyrophosphatase from Streptococcus pyogenes serotype M1.